The sequence spans 310 residues: AA9 family lytic polysaccharide monooxygenase A (310 aa).

Positions 1 to 21 (MPSTKVAALSAVLALASTVAG) are cleaved as a signal peptide. His-22 and His-107 together coordinate Cu(2+). 2 disulfides stabilise this stretch: Cys-77–Cys-199 and Cys-118–Cys-122. N-linked (GlcNAc...) asparagine glycosylation is found at Asn-121 and Asn-159. Residue His-185 participates in O2 binding. Tyr-196 contributes to the Cu(2+) binding site.

Belongs to the polysaccharide monooxygenase AA9 family. Cu(2+) is required as a cofactor.

The protein localises to the secreted. The enzyme catalyses [(1-&gt;4)-beta-D-glucosyl]n+m + reduced acceptor + O2 = 4-dehydro-beta-D-glucosyl-[(1-&gt;4)-beta-D-glucosyl]n-1 + [(1-&gt;4)-beta-D-glucosyl]m + acceptor + H2O.. In terms of biological role, lytic polysaccharide monooxygenase (LPMO) that depolymerizes crystalline and amorphous polysaccharides via the oxidation of scissile alpha- or beta-(1-4)-glycosidic bonds, yielding C1, C4 as well as C6 oxidation products. Catalysis by LPMOs requires the reduction of the active-site copper from Cu(II) to Cu(I) by a reducing agent and H(2)O(2) or O(2) as a cosubstrate. Active on cellulose, but not on xylan, starch, or chitin. The sequence is that of AA9 family lytic polysaccharide monooxygenase A from Talaromyces pinophilus (Penicillium pinophilum).